Consider the following 74-residue polypeptide: UPF0154 protein LSL_0542 (74 aa).

A helical membrane pass occupies residues 5–25; sequence IWVLIVIIAAVLGFVGGFFAA.

Belongs to the UPF0154 family.

It is found in the cell membrane. This Ligilactobacillus salivarius (strain UCC118) (Lactobacillus salivarius) protein is UPF0154 protein LSL_0542.